We begin with the raw amino-acid sequence, 428 residues long: Trigger factor (428 aa).

A PPIase FKBP-type domain is found at 163-248 (GNIAVIDFKG…VKEIKVKELP (86 aa)).

Belongs to the FKBP-type PPIase family. Tig subfamily.

It localises to the cytoplasm. The enzyme catalyses [protein]-peptidylproline (omega=180) = [protein]-peptidylproline (omega=0). In terms of biological role, involved in protein export. Acts as a chaperone by maintaining the newly synthesized protein in an open conformation. Functions as a peptidyl-prolyl cis-trans isomerase. The chain is Trigger factor from Clostridium perfringens (strain ATCC 13124 / DSM 756 / JCM 1290 / NCIMB 6125 / NCTC 8237 / Type A).